We begin with the raw amino-acid sequence, 290 residues long: Ribosomal RNA small subunit methyltransferase A (290 aa).

S-adenosyl-L-methionine-binding residues include Asn27, Leu29, Gly54, Glu75, Asp100, and Asn125.

It belongs to the class I-like SAM-binding methyltransferase superfamily. rRNA adenine N(6)-methyltransferase family. RsmA subfamily.

It localises to the cytoplasm. It carries out the reaction adenosine(1518)/adenosine(1519) in 16S rRNA + 4 S-adenosyl-L-methionine = N(6)-dimethyladenosine(1518)/N(6)-dimethyladenosine(1519) in 16S rRNA + 4 S-adenosyl-L-homocysteine + 4 H(+). In terms of biological role, specifically dimethylates two adjacent adenosines (A1518 and A1519) in the loop of a conserved hairpin near the 3'-end of 16S rRNA in the 30S particle. May play a critical role in biogenesis of 30S subunits. The sequence is that of Ribosomal RNA small subunit methyltransferase A from Streptococcus pneumoniae (strain ATCC BAA-255 / R6).